A 302-amino-acid chain; its full sequence is 2-phosphoglycerate kinase (302 aa).

Residues 2 to 89 (IKVIERDGKV…FWRRFRKLKI (88 aa)) form the ATP-cone domain.

Belongs to the 2-phosphoglycerate kinase family. A divalent metal cation serves as cofactor.

The enzyme catalyses (2R)-2-phosphoglycerate + ATP = (2R)-2,3-bisphosphoglycerate + ADP + H(+). It participates in thermoadapter biosynthesis; cyclic 2,3-diphosphoglycerate biosynthesis; cyclic 2,3-diphosphoglycerate from 2-phospho-D-glycerate: step 1/2. Functionally, catalyzes the phosphorylation of 2-phosphoglycerate to 2,3-diphosphoglycerate. Involved in the biosynthesis of cyclic 2,3-bisphosphoglycerate, a thermoprotectant. The sequence is that of 2-phosphoglycerate kinase from Pyrococcus furiosus (strain ATCC 43587 / DSM 3638 / JCM 8422 / Vc1).